Reading from the N-terminus, the 108-residue chain is UPF0145 protein ACIAD2946 (108 aa).

It belongs to the UPF0145 family.

This chain is UPF0145 protein ACIAD2946, found in Acinetobacter baylyi (strain ATCC 33305 / BD413 / ADP1).